A 296-amino-acid chain; its full sequence is Calponin-2 (296 aa).

N-acetylserine is present on Ser-2. 2 positions are modified to N6-acetyllysine: Lys-8 and Lys-25. The Calponin-homology (CH) domain occupies 28-132 (PQKEAELRSW…SLLALAGKAK (105 aa)). A Phosphoserine modification is found at Ser-138. Calponin-like repeat units follow at residues 166–191 (IGLQ…RHLY), 206–231 (ISLQ…RHIY), and 245–269 (MSLQ…RQIY). Residues 275 to 296 (PQGPAADGAPAAAGDCPGPGES) are disordered.

Belongs to the calponin family. Smooth muscle, and tissues containing significant amounts of smooth muscle.

Its function is as follows. Thin filament-associated protein that is implicated in the regulation and modulation of smooth muscle contraction. It is capable of binding to actin, calmodulin and tropomyosin. The interaction of calponin with actin inhibits the actomyosin Mg-ATPase activity. The sequence is that of Calponin-2 (CNN2) from Sus scrofa (Pig).